The chain runs to 158 residues: Large ribosomal subunit protein uL30 (158 aa).

This sequence belongs to the universal ribosomal protein uL30 family. As to quaternary structure, part of the 50S ribosomal subunit.

The chain is Large ribosomal subunit protein uL30 from Saccharolobus islandicus (strain Y.N.15.51 / Yellowstone #2) (Sulfolobus islandicus).